We begin with the raw amino-acid sequence, 228 residues long: Sodium channel regulatory subunit beta-4 (228 aa).

Positions 1-30 (MSRAGNRGNTQARWLGTGLLGLFLLPMYLS) are cleaved as a signal peptide. Residues 31–148 (LEVSVGKATT…KDLNNSATIF (118 aa)) form the Ig-like C2-type domain. Over 31 to 161 (LEVSVGKATT…VDKLEKVDNT (131 aa)) the chain is Extracellular. 4 N-linked (GlcNAc...) asparagine glycosylation sites follow: Asn45, Asn71, Asn113, and Asn142. Cys53 and Cys131 form a disulfide bridge. A helical transmembrane segment spans residues 162-182 (VTLIILAVVGGVIGLLVCILL). Residues 183–228 (LKKLITFILKKTREKKKECLVSSSGNDNTENGLPGSKAEEKPPTKV) are Cytoplasmic-facing. Residues 199 to 228 (KECLVSSSGNDNTENGLPGSKAEEKPPTKV) are disordered. The span at 203-213 (VSSSGNDNTEN) shows a compositional bias: polar residues. Over residues 219–228 (KAEEKPPTKV) the composition is skewed to basic and acidic residues.

It belongs to the sodium channel auxiliary subunit SCN4B (TC 8.A.17) family. A voltage-gated sodium (Nav) channel consists of an ion-conducting pore-forming alpha subunit functional on its own that is regulated by one or more beta subunits. The beta subunit SCN4B is disulfide-linked to the pore-forming alpha subunit. Interacts with SCN1A; regulatory subunit of SCN1A/Nav1.1. Interacts with SCN2A; regulatory subunit of SCN2A/Nav1.2. In terms of processing, contains an interchain disulfide bond with SCN2A.

The protein localises to the cell membrane. In terms of biological role, regulatory subunit of multiple voltage-gated sodium (Nav) channels directly mediating the depolarization of excitable membranes. Navs, also called VGSCs (voltage-gated sodium channels) or VDSCs (voltage-dependent sodium channels), operate by switching between closed and open conformations depending on the voltage difference across the membrane. In the open conformation they allow Na(+) ions to selectively pass through the pore, along their electrochemical gradient. The influx of Na+ ions provokes membrane depolarization, initiating the propagation of electrical signals throughout cells and tissues. The accessory beta subunits participate in localization and functional modulation of the Nav channels. Modulates the activity of SCN1A/Nav1.1. Modulates the activity of SCN2A/Nav1.2. This is Sodium channel regulatory subunit beta-4 from Mus musculus (Mouse).